The sequence spans 462 residues: Argininosuccinate lyase (462 aa).

This sequence belongs to the lyase 1 family. Argininosuccinate lyase subfamily.

It localises to the cytoplasm. The enzyme catalyses 2-(N(omega)-L-arginino)succinate = fumarate + L-arginine. The protein operates within amino-acid biosynthesis; L-arginine biosynthesis; L-arginine from L-ornithine and carbamoyl phosphate: step 3/3. In Gloeothece citriformis (strain PCC 7424) (Cyanothece sp. (strain PCC 7424)), this protein is Argininosuccinate lyase.